The sequence spans 991 residues: MAGPVSLRDLLMGASAWMGSESPGGSPTEGGGSAAGGPEPPWREDEICVVGIFGKTALRLNSEKFSLVNTVCDRQVFPLFRHQDPGDPGPGIRTEAGAVGEAGGAEDPGAAAGGSVRGSGAVAEGNRTEAGSQDYSLLQAYYSQESKVLYLLLTSICDNSQLLRACRALQSGEAGGGLSLPHAEAHEFWKHQEKLQCLSLLYLFSVCHILLLVHPTCSFDITYDRVFRALDGLRQKVLPLLKTAIKDCPVGKDWKLNCRPCPPRLLFLFQLNGALKVEPPRNQDPAHPDKPKKHSPKRRLQHALEDQIYRIFRKSRVLTNQSINCLFTVPANQAFVYIVPGSQEEDPVGMLLDQLRSHCTVKDPESLLVPAPLSGPRRYQVMRQHSRQQLSFHIDSSSSSSSGQLVDFTLREFLWQHVELVLSKKGFDDSVGRNPQPSHFELPTYQKWISAASKLYEVAIDGKEEDLGSPTGELTSKILSSIKVLEGFLDIDTKFSENRCQKALPMAHSAYQSNLPHNYTMTVHKNQLAQALRVYSQHARGPAFHKYAMQLHEDCYKFWSNGHQLCEERSLTDQHCVHKFHSLPKSGEKPEADRNPPVLYHNSRARSTGACNCGRKQAPRDDPFDIKAANYDFYQLLEEKCCGKLDHINFPVFEPSTPDPAPAKNESSPAPPDSDADKLKEKEPQTQGESTSLSLALSLGQSTDSLGTYPADPQAGGDNPEVHGQVEVKTEKRPNFVDRQASTVEYLPGMLHSNCPKGLLPKFSSWSLVKLGPAKSYNFHTGLDQQGFIPGTNYLMPWDIVIRTRAEDEGDLDTNSWPAPNKAIPGKRSAVVMGRGRRRDDIARAFVGFEYEDSRGRRFMCSGPDKVMKVMGSGPKESALKALNSDMPLYILSSSQGRGLKPHYAQLMRLFVVVPDAPLQIILMPQVQPGPPPCPVFYPEKQEITLPPDGLWVLRFPYAYVTERGPCFPPKENVQLMSYKVLRGVLKAVTQ.

Disordered regions lie at residues 16–41 (AWMGSESPGGSPTEGGGSAAGGPEPP), 82–127 (HQDP…EGNR), and 279–299 (PPRNQDPAHPDKPKKHSPKRR). Positions 95–110 (EAGAVGEAGGAEDPGA) are enriched in low complexity. A Phosphoserine modification is found at S115. Over residues 279–289 (PPRNQDPAHPD) the composition is skewed to basic and acidic residues. A compositionally biased stretch (basic residues) spans 290–299 (KPKKHSPKRR). Phosphoserine occurs at positions 469 and 668. The interval 653–722 (FEPSTPDPAP…PQAGGDNPEV (70 aa)) is disordered. Basic and acidic residues predominate over residues 675-684 (DADKLKEKEP). Residues 685–706 (QTQGESTSLSLALSLGQSTDSL) show a composition bias toward polar residues. 2 positions are modified to phosphoserine: S742 and S895. At R898 the chain carries Omega-N-methylarginine.

This sequence belongs to the SMG8 family. Component of the SMG1C complex composed of SMG1, SMG8 and SMG9; the recruitment of SMG8 to SMG1 N-terminus induces a large conformational change in the SMG1 C-terminal head domain containing the catalytic domain. Forms heterodimers with SMG9; this assembly form may represent a SMG1C intermediate form. Phosphorylated by SMG1.

Its function is as follows. Involved in nonsense-mediated decay (NMD) of mRNAs containing premature stop codons. Is recruited by release factors to stalled ribosomes together with SMG1 and SMG9 (forming the SMG1C protein kinase complex) and, in the SMG1C complex, is required to mediate the recruitment of SMG1 to the ribosome:SURF complex and to suppress SMG1 kinase activity until the ribosome:SURF complex locates the exon junction complex (EJC). Acts as a regulator of kinase activity. In Homo sapiens (Human), this protein is Nonsense-mediated mRNA decay factor SMG8 (SMG8).